The chain runs to 231 residues: Phosphatidylserine decarboxylase proenzyme (231 aa).

S188 (schiff-base intermediate with substrate; via pyruvic acid) is an active-site residue. S188 carries the post-translational modification Pyruvic acid (Ser); by autocatalysis.

Belongs to the phosphatidylserine decarboxylase family. PSD-A subfamily. Heterodimer of a large membrane-associated beta subunit and a small pyruvoyl-containing alpha subunit. Pyruvate serves as cofactor. Is synthesized initially as an inactive proenzyme. Formation of the active enzyme involves a self-maturation process in which the active site pyruvoyl group is generated from an internal serine residue via an autocatalytic post-translational modification. Two non-identical subunits are generated from the proenzyme in this reaction, and the pyruvate is formed at the N-terminus of the alpha chain, which is derived from the carboxyl end of the proenzyme. The post-translation cleavage follows an unusual pathway, termed non-hydrolytic serinolysis, in which the side chain hydroxyl group of the serine supplies its oxygen atom to form the C-terminus of the beta chain, while the remainder of the serine residue undergoes an oxidative deamination to produce ammonia and the pyruvoyl prosthetic group on the alpha chain.

It localises to the cell membrane. The catalysed reaction is a 1,2-diacyl-sn-glycero-3-phospho-L-serine + H(+) = a 1,2-diacyl-sn-glycero-3-phosphoethanolamine + CO2. It participates in phospholipid metabolism; phosphatidylethanolamine biosynthesis; phosphatidylethanolamine from CDP-diacylglycerol: step 2/2. Catalyzes the formation of phosphatidylethanolamine (PtdEtn) from phosphatidylserine (PtdSer). This chain is Phosphatidylserine decarboxylase proenzyme, found in Rickettsia africae (strain ESF-5).